Consider the following 124-residue polypeptide: S-adenosylmethionine decarboxylase proenzyme (124 aa).

The Schiff-base intermediate with substrate; via pyruvic acid role is filled by S70. The residue at position 70 (S70) is a Pyruvic acid (Ser); by autocatalysis. The active-site Proton acceptor; for processing activity is H75. Catalysis depends on C90, which acts as the Proton donor; for catalytic activity.

The protein belongs to the prokaryotic AdoMetDC family. Type 1 subfamily. In terms of assembly, heterotetramer of two alpha and two beta chains arranged as a dimer of alpha/beta heterodimers. Pyruvate serves as cofactor. Post-translationally, is synthesized initially as an inactive proenzyme. Formation of the active enzyme involves a self-maturation process in which the active site pyruvoyl group is generated from an internal serine residue via an autocatalytic post-translational modification. Two non-identical subunits are generated from the proenzyme in this reaction, and the pyruvate is formed at the N-terminus of the alpha chain, which is derived from the carboxyl end of the proenzyme. The post-translation cleavage follows an unusual pathway, termed non-hydrolytic serinolysis, in which the side chain hydroxyl group of the serine supplies its oxygen atom to form the C-terminus of the beta chain, while the remainder of the serine residue undergoes an oxidative deamination to produce ammonia and the pyruvoyl group blocking the N-terminus of the alpha chain.

It catalyses the reaction S-adenosyl-L-methionine + H(+) = S-adenosyl 3-(methylsulfanyl)propylamine + CO2. It participates in amine and polyamine biosynthesis; S-adenosylmethioninamine biosynthesis; S-adenosylmethioninamine from S-adenosyl-L-methionine: step 1/1. Its function is as follows. Catalyzes the decarboxylation of S-adenosylmethionine to S-adenosylmethioninamine (dcAdoMet), the propylamine donor required for the synthesis of the polyamines spermine and spermidine from the diamine putrescine. The protein is S-adenosylmethionine decarboxylase proenzyme of Pyrobaculum neutrophilum (strain DSM 2338 / JCM 9278 / NBRC 100436 / V24Sta) (Thermoproteus neutrophilus).